A 335-amino-acid chain; its full sequence is Probable magnesium transporter NIPA1 (335 aa).

Residues 1 to 7 lie on the Extracellular side of the membrane; it reads MDQMSPD. A helical membrane pass occupies residues 8–28; it reads NINGVILAVSSSIFIGSSFII. The Cytoplasmic portion of the chain corresponds to 29–55; that stretch reads KKKGLKKAGASGVRAGEGGYGYLKEPW. The chain crosses the membrane as a helical span at residues 56–76; sequence WWAGMITMIVGEVANFAAYAF. Topologically, residues 77-79 are extracellular; the sequence is APA. A helical transmembrane segment spans residues 80 to 100; the sequence is ILVTPLGALSIIFSAVLAHFI. At 101 to 104 the chain is on the cytoplasmic side; it reads LKEK. A helical membrane pass occupies residues 105 to 125; sequence LHMFGILGCILCVVGSTTIVL. The Extracellular segment spans residues 126 to 143; sequence HAPHEQKIESVKQIWQLA. The chain crosses the membrane as a helical span at residues 144–164; that stretch reads IEPGFLVYSAVIVIVVAILIF. Residues 165–179 are Cytoplasmic-facing; it reads YYEPRYGKTHMIVYV. The chain crosses the membrane as a helical span at residues 180–200; it reads GICSLMGSLTVMSVKAVAIAI. Over 201–212 the chain is Extracellular; the sequence is KLTFSGTNQFKY. The helical transmembrane segment at 213 to 233 threads the bilayer; sequence FNTWIFILVVATCCILQINYL. Residues 234–244 lie on the Cytoplasmic side of the membrane; sequence NKALDTFNTAV. Residues 245 to 265 form a helical membrane-spanning segment; it reads ISPVYYVMFTTFTIIASMIMF. Residues 266 to 272 are Extracellular-facing; that stretch reads KDWASQS. The helical transmembrane segment at 273–293 threads the bilayer; it reads GLKIATELCGFVTILSGTFLL. The Cytoplasmic portion of the chain corresponds to 294 to 335; the sequence is HKTKDMGNSASGRGSISMPTRDTPVFTNSGSGRSSSSDKVAS. Residues 303-321 are compositionally biased toward polar residues; that stretch reads ASGRGSISMPTRDTPVFTN. Residues 303–335 form a disordered region; that stretch reads ASGRGSISMPTRDTPVFTNSGSGRSSSSDKVAS. A compositionally biased stretch (low complexity) spans 322–335; the sequence is SGSGRSSSSDKVAS.

It belongs to the NIPA (TC 2.A.7) family. In terms of assembly, homodimer.

Its subcellular location is the cell membrane. It is found in the early endosome. Its function is as follows. Acts as a Mg(2+) transporter. Can also transport other divalent cations such as Fe(2+), Sr(2+), Ba(2+), Mn(2+) and Co(2+) but to a much less extent than Mg(2+). This Arabidopsis thaliana (Mouse-ear cress) protein is Probable magnesium transporter NIPA1.